The chain runs to 324 residues: Phospho-N-acetylmuramoyl-pentapeptide-transferase (324 aa).

The next 10 helical transmembrane spans lie at 5 to 25, 52 to 72, 77 to 97, 122 to 142, 149 to 169, 176 to 196, 201 to 221, 227 to 247, 253 to 273, and 302 to 322; these read GLLV…PLFI, PTMG…IMAI, LGAE…IGFL, VIAI…YIMI, FELG…GSNA, LDGL…IIAV, FGVA…LVFN, VFMG…VAIL, LLVI…IQVI, and VVVT…YIGV.

It belongs to the glycosyltransferase 4 family. MraY subfamily. It depends on Mg(2+) as a cofactor.

The protein resides in the cell membrane. It catalyses the reaction UDP-N-acetyl-alpha-D-muramoyl-L-alanyl-gamma-D-glutamyl-meso-2,6-diaminopimeloyl-D-alanyl-D-alanine + di-trans,octa-cis-undecaprenyl phosphate = di-trans,octa-cis-undecaprenyl diphospho-N-acetyl-alpha-D-muramoyl-L-alanyl-D-glutamyl-meso-2,6-diaminopimeloyl-D-alanyl-D-alanine + UMP. It functions in the pathway cell wall biogenesis; peptidoglycan biosynthesis. Catalyzes the initial step of the lipid cycle reactions in the biosynthesis of the cell wall peptidoglycan: transfers peptidoglycan precursor phospho-MurNAc-pentapeptide from UDP-MurNAc-pentapeptide onto the lipid carrier undecaprenyl phosphate, yielding undecaprenyl-pyrophosphoryl-MurNAc-pentapeptide, known as lipid I. This Bacillus anthracis protein is Phospho-N-acetylmuramoyl-pentapeptide-transferase.